The following is a 311-amino-acid chain: MAKELIFGHQNPDTDAIGTAIAYSYLQNKLGYDTEAVALGEANDETKYALNKFGFTAPRVIKTASNEVDAVMLVDHNEPQQSVSDIDKVKVTHVVDHHRIMNFNTADPLYYRAAPVGCTSTIMWQMYNEKEIEIPQDIAGIMLSAIISDTLLLKSPTTTDQDKEAVVSLANIAGVDYKEYGLKMLKAGTNIADKSEEDLIDLDAKSFELNGSNVRVAQINVVDLPEALERKDAFLKAMDEASKREGYDMFMLLITNILDSDSEALVVGSDESKAKFEKAFNAKLSDSEVKLPGVVSRKKQVVPPLTNAFEA.

Mn(2+) contacts are provided by His-9, Asp-13, Asp-15, Asp-75, His-97, and Asp-149.

Belongs to the PPase class C family. Mn(2+) is required as a cofactor.

It is found in the cytoplasm. The enzyme catalyses diphosphate + H2O = 2 phosphate + H(+). This chain is Probable manganese-dependent inorganic pyrophosphatase, found in Lactobacillus johnsonii (strain CNCM I-12250 / La1 / NCC 533).